The primary structure comprises 131 residues: Ribosome-binding factor A (131 aa).

This sequence belongs to the RbfA family. In terms of assembly, monomer. Binds 30S ribosomal subunits, but not 50S ribosomal subunits or 70S ribosomes.

Its subcellular location is the cytoplasm. One of several proteins that assist in the late maturation steps of the functional core of the 30S ribosomal subunit. Associates with free 30S ribosomal subunits (but not with 30S subunits that are part of 70S ribosomes or polysomes). Required for efficient processing of 16S rRNA. May interact with the 5'-terminal helix region of 16S rRNA. This chain is Ribosome-binding factor A, found in Protochlamydia amoebophila (strain UWE25).